The chain runs to 564 residues: CTP synthase (564 aa).

The amidoligase domain stretch occupies residues 1-272 (MARPKNVKHI…DIRVLKKLGL (272 aa)). Serine 18 is a CTP binding site. UTP is bound at residue serine 18. 19–24 (SLGKGI) provides a ligand contact to ATP. Tyrosine 59 contributes to the L-glutamine binding site. Position 76 (aspartate 76) interacts with ATP. Aspartate 76 and glutamate 146 together coordinate Mg(2+). CTP contacts are provided by residues 153–155 (DIE), 193–198 (KTKPTQ), and lysine 229. UTP-binding positions include 193 to 198 (KTKPTQ) and lysine 229. Residues 299–543 (TIAICGKYTE…VAAAKEFAHG (245 aa)) form the Glutamine amidotransferase type-1 domain. Position 363 (glycine 363) interacts with L-glutamine. Cysteine 390 functions as the Nucleophile; for glutamine hydrolysis in the catalytic mechanism. L-glutamine is bound by residues 391-394 (LGMQ), glutamate 414, and arginine 471. Residues histidine 516 and glutamate 518 contribute to the active site.

The protein belongs to the CTP synthase family. In terms of assembly, homotetramer.

The catalysed reaction is UTP + L-glutamine + ATP + H2O = CTP + L-glutamate + ADP + phosphate + 2 H(+). It catalyses the reaction L-glutamine + H2O = L-glutamate + NH4(+). It carries out the reaction UTP + NH4(+) + ATP = CTP + ADP + phosphate + 2 H(+). Its pathway is pyrimidine metabolism; CTP biosynthesis via de novo pathway; CTP from UDP: step 2/2. With respect to regulation, allosterically activated by GTP, when glutamine is the substrate; GTP has no effect on the reaction when ammonia is the substrate. The allosteric effector GTP functions by stabilizing the protein conformation that binds the tetrahedral intermediate(s) formed during glutamine hydrolysis. Inhibited by the product CTP, via allosteric rather than competitive inhibition. Its function is as follows. Catalyzes the ATP-dependent amination of UTP to CTP with either L-glutamine or ammonia as the source of nitrogen. Regulates intracellular CTP levels through interactions with the four ribonucleotide triphosphates. The protein is CTP synthase of Prosthecochloris aestuarii (strain DSM 271 / SK 413).